A 714-amino-acid polypeptide reads, in one-letter code: Fatty acid oxidation complex subunit alpha (714 aa).

Positions 1-190 are enoyl-CoA hydratase; it reads MEMASAFTLN…KLGLVDDVVP (190 aa). Residues 306-714 are 3-hydroxyacyl-CoA dehydrogenase; sequence APLNSVGILG…FWKTTATDLQ (409 aa).

This sequence in the N-terminal section; belongs to the enoyl-CoA hydratase/isomerase family. It in the central section; belongs to the 3-hydroxyacyl-CoA dehydrogenase family. In terms of assembly, heterotetramer of two alpha chains (FadJ) and two beta chains (FadI).

The protein resides in the cytoplasm. The enzyme catalyses a (3S)-3-hydroxyacyl-CoA = a (2E)-enoyl-CoA + H2O. It catalyses the reaction a 4-saturated-(3S)-3-hydroxyacyl-CoA = a (3E)-enoyl-CoA + H2O. The catalysed reaction is a (3S)-3-hydroxyacyl-CoA + NAD(+) = a 3-oxoacyl-CoA + NADH + H(+). It carries out the reaction (3S)-3-hydroxybutanoyl-CoA = (3R)-3-hydroxybutanoyl-CoA. Its pathway is lipid metabolism; fatty acid beta-oxidation. Its function is as follows. Catalyzes the formation of a hydroxyacyl-CoA by addition of water on enoyl-CoA. Also exhibits 3-hydroxyacyl-CoA epimerase and 3-hydroxyacyl-CoA dehydrogenase activities. This chain is Fatty acid oxidation complex subunit alpha, found in Escherichia coli (strain SMS-3-5 / SECEC).